The primary structure comprises 180 residues: Outer membrane protein YfaZ (180 aa).

The N-terminal stretch at 1-21 (MKKIALAGLAGMLLVSASVNA) is a signal peptide.

Its subcellular location is the cell outer membrane. This Escherichia coli (strain K12) protein is Outer membrane protein YfaZ (yfaZ).